Reading from the N-terminus, the 160-residue chain is Transcriptional repressor NrdR (160 aa).

Residues 1 to 11 are compositionally biased toward polar residues; the sequence is MRCPSCSSLDT. The disordered stretch occupies residues 1 to 20; that stretch reads MRCPSCSSLDTQVKDSRPTE. Residues 3–34 fold into a zinc finger; that stretch reads CPSCSSLDTQVKDSRPTEDSSVIRRRRVCLAC. An ATP-cone domain is found at 49 to 139; sequence LTVIKRNGRR…VYRNFREAKD (91 aa).

This sequence belongs to the NrdR family. Zn(2+) serves as cofactor.

Its function is as follows. Negatively regulates transcription of bacterial ribonucleotide reductase nrd genes and operons by binding to NrdR-boxes. The polypeptide is Transcriptional repressor NrdR (Rhodopseudomonas palustris (strain BisA53)).